The primary structure comprises 439 residues: Putative FBD-associated F-box protein At1g05080 (439 aa).

The 47-residue stretch at 12–58 (EDRISVLPEDLLVVILDLLPTKDVVATMILSKRWLSIWTMVRTLEYT) folds into the F-box domain. Positions 360 to 410 (SWKQPSHVPECLSSQLEIFEWRDYGDRIIEEEFLTYVLANSKRLKTATISL) constitute an FBD domain.

This chain is Putative FBD-associated F-box protein At1g05080, found in Arabidopsis thaliana (Mouse-ear cress).